Consider the following 78-residue polypeptide: Large ribosomal subunit protein bL28 (78 aa).

This sequence belongs to the bacterial ribosomal protein bL28 family.

This chain is Large ribosomal subunit protein bL28, found in Prochlorococcus marinus (strain MIT 9301).